The primary structure comprises 412 residues: DNA polymerase IV (412 aa).

Positions 12-193 constitute a UmuC domain; that stretch reads ILHVDMNCFF…LPVGAMHGIG (182 aa). Mg(2+) contacts are provided by D16 and D112. Residue E113 is part of the active site. Residues 235–257 are disordered; that stretch reads KGMDDREVDPSQMGQHKSVGNSM. Positions 246–257 are enriched in polar residues; it reads QMGQHKSVGNSM.

It belongs to the DNA polymerase type-Y family. In terms of assembly, monomer. Mg(2+) is required as a cofactor.

It is found in the cytoplasm. The enzyme catalyses DNA(n) + a 2'-deoxyribonucleoside 5'-triphosphate = DNA(n+1) + diphosphate. Its function is as follows. Poorly processive, error-prone DNA polymerase involved in untargeted mutagenesis. Copies undamaged DNA at stalled replication forks, which arise in vivo from mismatched or misaligned primer ends. These misaligned primers can be extended by PolIV. Exhibits no 3'-5' exonuclease (proofreading) activity. May be involved in translesional synthesis, in conjunction with the beta clamp from PolIII. The protein is DNA polymerase IV of Bacillus anthracis.